The primary structure comprises 673 residues: Sodium/myo-inositol cotransporter 2 (673 aa).

Residues 1-27 lie on the Extracellular side of the membrane; it reads MESTTSSPQPPPSDALEAFPQKSMEPA. The chain crosses the membrane as a helical span at residues 28–48; the sequence is DIVVLVLYFLFVLAVGLWSTV. Topologically, residues 49-56 are cytoplasmic; it reads RTKRDTVK. Residues 57–77 form a helical membrane-spanning segment; it reads GYFLAGGDMVWWPVGASLFAS. Position 78 (N78) is a topological domain, extracellular. The chain crosses the membrane as a helical span at residues 79–99; the sequence is VGSGHFIGLAGSGAAVGISVA. Residues 100–102 are Cytoplasmic-facing; that stretch reads AYE. Residues 103-123 form a helical membrane-spanning segment; sequence LNGLFSVLMLAWIFLPIYIAG. Residues 124-180 lie on the Extracellular side of the membrane; the sequence is QVTTMPEYLKRRFGGSRIPITLASIYPSTHSLTILQVDMYAGAIFIQQSLHLDLYLA. Residues 181-201 traverse the membrane as a helical segment; sequence IVGLLAVTALYTVAGGLAAVI. The Cytoplasmic segment spans residues 202-208; it reads YTDALQT. Residues 209–229 traverse the membrane as a helical segment; that stretch reads VIMLIGAFILMGYSFAAVGGM. Residues 230-272 are Extracellular-facing; the sequence is EGLKDQYFLALASNRSENSSCGLPREDAFHIFRDPLTSDLPWP. Residues 273 to 293 form a helical membrane-spanning segment; sequence GILFGMSIPSLWYWCTDQVIV. Residues 294-308 are Cytoplasmic-facing; that stretch reads QRSLAAKNLSHAKGG. Residues 309-329 form a helical membrane-spanning segment; that stretch reads SLMAAYLKVLPLFLMVFPGMV. The Extracellular portion of the chain corresponds to 330–375; sequence SRILFPDQVACAHPDICQRVCSNPSGCSDIAYPKLVLELLPTGLRG. Residues 376-396 traverse the membrane as a helical segment; sequence LMMAVMVAALMSSLTSIFNSA. Over 397-418 the chain is Cytoplasmic; it reads STIFTMDLWHHIRPRASERELM. A helical membrane pass occupies residues 419–439; sequence IVGRVFVLALVLVSILWIPVV. The Extracellular segment spans residues 440–446; that stretch reads QASQGGQ. Residues 447-467 form a helical membrane-spanning segment; that stretch reads LFIYIQSISSYLQPPVAVVFI. At 468–479 the chain is on the cytoplasmic side; that stretch reads MGCFWKRTNEKG. A helical membrane pass occupies residues 480-500; that stretch reads AFSGLILGLLLGLVRLILDFV. Over 501–521 the chain is Extracellular; that stretch reads YVQPRCDQPDDRPAVVKDVHY. Residues 522-542 form a helical membrane-spanning segment; sequence LYFSMILSSTTLITVFTVSWF. Topologically, residues 543–652 are cytoplasmic; that stretch reads TETPSKEMVS…SLEENPLVKT (110 aa). A helical membrane pass occupies residues 653 to 673; it reads LLDVNCIVCISCAIFLWGYFA.

Belongs to the sodium:solute symporter (SSF) (TC 2.A.21) family. As to expression, expressed in kidney and small intestine.

Its subcellular location is the membrane. It is found in the apical cell membrane. The catalysed reaction is myo-inositol(out) + 2 Na(+)(out) = myo-inositol(in) + 2 Na(+)(in). It carries out the reaction 1D-chiro-inositol(out) + 2 Na(+)(out) = 1D-chiro-inositol(in) + 2 Na(+)(in). It catalyses the reaction D-glucose(out) + 2 Na(+)(out) = D-glucose(in) + 2 Na(+)(in). The enzyme catalyses D-xylose(out) + 2 Na(+)(out) = D-xylose(in) + 2 Na(+)(in). With respect to regulation, MI transport activity inhibited by D-chiro-inositol (DCI), phlorizin (Pz) and sodium (Na(+)). Insulin increases D-chiro-inositol uptake. Involved in the sodium-dependent cotransport of myo-inositol (MI) with a Na(+):MI stoichiometry of 2:1. Exclusively responsible for apical MI transport and absorption in intestine. Can also transport D-chiro-inositol (DCI) but not L-fucose. Exhibits stereospecific cotransport of both D-glucose and D-xylose. May induce apoptosis through the TNF-alpha, PDCD1 pathway. May play a role in the regulation of MI concentration in serum, involving reabsorption in at least the proximal tubule of the kidney. The polypeptide is Sodium/myo-inositol cotransporter 2 (Rattus norvegicus (Rat)).